The following is a 338-amino-acid chain: Sorting nexin-15 (338 aa).

One can recognise a PX domain in the interval 1–131; that stretch reads MSRRAKKDDF…EFFRGGEVTR (131 aa). A 1,2-diacyl-sn-glycero-3-phospho-(1D-myo-inositol-3-phosphate) is bound by residues Arg52, Ser54, Arg88, and Arg97. Residue Arg106 is modified to Omega-N-methylarginine. Positions 134–155 are disordered; it reads EVSRDLQILPPPLIPTPPSDEA. A compositionally biased stretch (pro residues) spans 142–151; sequence LPPPLIPTPP. Phosphoserine occurs at positions 202 and 228. Residues 240–270 form a disordered region; that stretch reads VQSKRLDQEPWEPGGREEEEAEDGDPAPAYL. The 73-residue stretch at 266–338 folds into the MIT domain; sequence APAYLGQATE…RAETLHAHLP (73 aa).

This sequence belongs to the sorting nexin family. As to quaternary structure, homodimer. Interacts with SNX1, SNX2 and SNX4.

It localises to the cytoplasm. The protein resides in the membrane. The protein localises to the cytoplasmic vesicle membrane. May be involved in several stages of intracellular trafficking. Overexpression of SNX15 disrupts the normal trafficking of proteins from the plasma membrane to recycling endosomes or the TGN. The sequence is that of Sorting nexin-15 (Snx15) from Rattus norvegicus (Rat).